Reading from the N-terminus, the 64-residue chain is Large ribosomal subunit protein bL35 (64 aa).

This sequence belongs to the bacterial ribosomal protein bL35 family.

This Vibrio campbellii (strain ATCC BAA-1116) protein is Large ribosomal subunit protein bL35.